A 501-amino-acid polypeptide reads, in one-letter code: Beta-secretase 1 (501 aa).

A signal peptide spans M1–G21. Positions S22 to R45 are excised as a propeptide. The Extracellular portion of the chain corresponds to S22–T457. The tract at residues L39–G58 is disordered. The region spanning Y75 to A416 is the Peptidase A1 domain. D93 is an active-site residue. An N6-acetyllysine modification is found at K126. Residues N153, N172, and N223 are each glycosylated (N-linked (GlcNAc...) asparagine). Cystine bridges form between C216–C420, C278–C443, and C330–C380. An N6-acetyllysine mark is found at K275, K279, and K285. The active site involves D289. N6-acetyllysine occurs at positions 299, 300, and 307. N-linked (GlcNAc...) asparagine glycosylation occurs at N354. A helical membrane pass occupies residues I458–C478. 4 S-palmitoyl cysteine lipidation sites follow: C474, C478, C482, and C485. At Q479–K501 the chain is on the cytoplasmic side. The interval Q479–K501 is interaction with RTN3. Positions D496–L500 match the DXXLL motif. S498 bears the Phosphoserine mark. A Glycyl lysine isopeptide (Lys-Gly) (interchain with G-Cter in ubiquitin) cross-link involves residue K501.

The protein belongs to the peptidase A1 family. Monomer. Interacts (via DXXLL motif) with GGA1, GGA2 and GGA3 (via their VHS domain); the interaction highly increases when BACE1 is phosphorylated at Ser-498. Interacts with RTN1; RTN2; RTN3 and RTN4; the interaction leads to inhibition of amyloid precursor protein processing. Interacts with SNX6. Interacts with PCSK9. Interacts with NAT8 and NAT8B. Interacts with BIN1. Interacts (via extracellular domain) with ADAM10 (via extracellular domain). Interacts with SORL1; this interaction may affect binding with APP and hence reduce APP cleavage. Interacts with NRDC AND NRG1. Palmitoylation mediates lipid raft localization. In terms of processing, acetylated in the endoplasmic reticulum at Lys-126, Lys-275, Lys-279, Lys-285, Lys-299, Lys-300 and Lys-307. Acetylation by NAT8 and NAT8B is transient and deacetylation probably occurs in the Golgi. Acetylation regulates the maturation, the transport to the plasma membrane, the stability and the expression of the protein. Post-translationally, ubiquitinated at Lys-501, ubiquitination leads to lysosomal degradation. Monoubiquitinated and 'Lys-63'-linked polyubitinated. Deubiquitnated by USP8; inhibits lysosomal degradation. Phosphorylation at Ser-498 is required for interaction with GGA1 and retrograded transport from endosomal compartments to the trans-Golgi network. Non-phosphorylated BACE1 enters a direct recycling route to the cell surface. In terms of processing, N-Glycosylated. Addition of a bisecting N-acetylglucosamine by MGAT3 blocks lysosomal targeting, further degradation and is required for maintaining stability under stress conditions.

The protein resides in the cell membrane. Its subcellular location is the golgi apparatus. It localises to the trans-Golgi network. It is found in the endoplasmic reticulum. The protein localises to the endosome. The protein resides in the cell surface. Its subcellular location is the cytoplasmic vesicle membrane. It localises to the membrane raft. It is found in the lysosome. The protein localises to the late endosome. The protein resides in the early endosome. Its subcellular location is the recycling endosome. It localises to the cell projection. It is found in the axon. The protein localises to the dendrite. The enzyme catalyses Broad endopeptidase specificity. Cleaves Glu-Val-Asn-Leu-|-Asp-Ala-Glu-Phe in the Swedish variant of Alzheimer's amyloid precursor protein.. With respect to regulation, inhibited by RTN3 and RTN4. Functionally, responsible for the proteolytic processing of the amyloid precursor protein (APP). Cleaves at the N-terminus of the A-beta peptide sequence, between residues 671 and 672 of APP, leads to the generation and extracellular release of beta-cleaved soluble APP, and a corresponding cell-associated C-terminal fragment which is later released by gamma-secretase. Cleaves CHL1. This chain is Beta-secretase 1 (BACE1), found in Bos taurus (Bovine).